We begin with the raw amino-acid sequence, 263 residues long: 3-methyl-2-oxobutanoate hydroxymethyltransferase (263 aa).

Residues D44 and D83 each contribute to the Mg(2+) site. 3-methyl-2-oxobutanoate contacts are provided by residues 44–45, D83, and K112; that span reads DS. E114 serves as a coordination point for Mg(2+). E181 (proton acceptor) is an active-site residue.

It belongs to the PanB family. In terms of assembly, homodecamer; pentamer of dimers. Mg(2+) is required as a cofactor.

It localises to the cytoplasm. The enzyme catalyses 3-methyl-2-oxobutanoate + (6R)-5,10-methylene-5,6,7,8-tetrahydrofolate + H2O = 2-dehydropantoate + (6S)-5,6,7,8-tetrahydrofolate. The protein operates within cofactor biosynthesis; (R)-pantothenate biosynthesis; (R)-pantoate from 3-methyl-2-oxobutanoate: step 1/2. Catalyzes the reversible reaction in which hydroxymethyl group from 5,10-methylenetetrahydrofolate is transferred onto alpha-ketoisovalerate to form ketopantoate. The chain is 3-methyl-2-oxobutanoate hydroxymethyltransferase from Sulfurimonas denitrificans (strain ATCC 33889 / DSM 1251) (Thiomicrospira denitrificans (strain ATCC 33889 / DSM 1251)).